Reading from the N-terminus, the 120-residue chain is Putative ferric transport system permease-like protein AfuB (120 aa).

The Cytoplasmic portion of the chain corresponds to 1-38 (MESLPGQIDKSLDEASLSLRAGSLRTITHILLPLLRPA). Positions 1-102 (MESLPGQIDK…VVMLAIIFIF (102 aa)) constitute an ABC transmembrane type-1 domain. The helical transmembrane segment at 39-59 (ILSALIYSFVRAITTVSAIVF) threads the bilayer. The Periplasmic portion of the chain corresponds to 60-81 (LVTPDTRVATAYILNRVEDGEY). A helical transmembrane segment spans residues 82-102 (GVAIAYGSILIVVMLAIIFIF). Residues 103–120 (DWLIGESRTSRSKAKNQA) lie on the Cytoplasmic side of the membrane.

This sequence belongs to the binding-protein-dependent transport system permease family. FbpB subfamily.

Its subcellular location is the cell inner membrane. In terms of biological role, a severely truncated paralog of the AfuB uptake protein, homologous only to the last 20% of the intact protein in Actinobacillus. The sequence is that of Putative ferric transport system permease-like protein AfuB (afuB) from Escherichia coli (strain K12).